Reading from the N-terminus, the 278-residue chain is 4-diphosphocytidyl-2-C-methyl-D-erythritol kinase (278 aa).

Lys9 is a catalytic residue. Residue 89–99 (PVASGIGGGSA) coordinates ATP. Asp128 is a catalytic residue.

This sequence belongs to the GHMP kinase family. IspE subfamily.

It catalyses the reaction 4-CDP-2-C-methyl-D-erythritol + ATP = 4-CDP-2-C-methyl-D-erythritol 2-phosphate + ADP + H(+). Its pathway is isoprenoid biosynthesis; isopentenyl diphosphate biosynthesis via DXP pathway; isopentenyl diphosphate from 1-deoxy-D-xylulose 5-phosphate: step 3/6. Its function is as follows. Catalyzes the phosphorylation of the position 2 hydroxy group of 4-diphosphocytidyl-2C-methyl-D-erythritol. In Cereibacter sphaeroides (strain ATCC 17029 / ATH 2.4.9) (Rhodobacter sphaeroides), this protein is 4-diphosphocytidyl-2-C-methyl-D-erythritol kinase.